The chain runs to 319 residues: Annexin A4 (319 aa).

A Phosphothreonine modification is found at T7. Phosphoserine is present on S12. Annexin repeat units lie at residues 14–85 (FNAT…GMMT), 86–157 (PTVL…SLTA), 169–241 (ALVR…AIVK), and 245–316 (NKPA…ILCG). An N6-acetyllysine mark is found at K213, K293, and K300.

It belongs to the annexin family.

The protein resides in the zymogen granule membrane. Calcium/phospholipid-binding protein which promotes membrane fusion and is involved in exocytosis. The sequence is that of Annexin A4 (Anxa4) from Rattus norvegicus (Rat).